The following is a 68-amino-acid chain: MARLFKVTACVPSQTRIRTQRELQNTYFTKLVPFENWFREQQRIMKMGGKIVKVELATGKQGTNTGLL.

A CpcD-like domain is found at Ala-2–Ala-57.

Belongs to the phycobilisome linker protein family.

It is found in the cellular thylakoid membrane. In terms of biological role, rod linker protein, associated with allophycocyanin. Linker polypeptides determine the state of aggregation and the location of the disk-shaped phycobiliprotein units within the phycobilisome and modulate their spectroscopic properties in order to mediate a directed and optimal energy transfer. This is Phycobilisome 7.8 kDa linker polypeptide, allophycocyanin-associated, core (apcC) from Microchaete diplosiphon (Fremyella diplosiphon).